Reading from the N-terminus, the 271-residue chain is Large ribosomal subunit protein uL2cz/uL2cy (271 aa).

Disordered stretches follow at residues 1-22 (MAKHLYKTPIPSTRKGTVDRQV) and 223-271 (PVDH…RRRK).

This sequence belongs to the universal ribosomal protein uL2 family. In terms of assembly, part of the 50S ribosomal subunit.

The protein localises to the plastid. Its subcellular location is the chloroplast. The protein is Large ribosomal subunit protein uL2cz/uL2cy (rpl2-A) of Sorghum bicolor (Sorghum).